We begin with the raw amino-acid sequence, 194 residues long: Peptidyl-tRNA hydrolase (194 aa).

Tyrosine 19 contacts tRNA. Residue histidine 24 is the Proton acceptor of the active site. Phenylalanine 69, asparagine 71, and asparagine 117 together coordinate tRNA.

It belongs to the PTH family. As to quaternary structure, monomer.

It is found in the cytoplasm. The enzyme catalyses an N-acyl-L-alpha-aminoacyl-tRNA + H2O = an N-acyl-L-amino acid + a tRNA + H(+). Hydrolyzes ribosome-free peptidyl-tRNAs (with 1 or more amino acids incorporated), which drop off the ribosome during protein synthesis, or as a result of ribosome stalling. In terms of biological role, catalyzes the release of premature peptidyl moieties from peptidyl-tRNA molecules trapped in stalled 50S ribosomal subunits, and thus maintains levels of free tRNAs and 50S ribosomes. The sequence is that of Peptidyl-tRNA hydrolase from Neorickettsia sennetsu (strain ATCC VR-367 / Miyayama) (Ehrlichia sennetsu).